Here is a 503-residue protein sequence, read N- to C-terminus: tRNA-2-methylthio-N(6)-dimethylallyladenosine synthase (503 aa).

The region spanning 5–121 is the MTTase N-terminal domain; that stretch reads RSYEIRTFGC…LPVLLERARH (117 aa). [4Fe-4S] cluster-binding residues include C14, C50, C84, C158, C162, and C165. The Radical SAM core domain occupies 144–380; the sequence is RESAYAGWVS…IALQEEISLA (237 aa). The 71-residue stretch at 383–453 folds into the TRAM domain; the sequence is RELIGTEVEL…PHHLIADAPV (71 aa).

The protein belongs to the methylthiotransferase family. MiaB subfamily. As to quaternary structure, monomer. It depends on [4Fe-4S] cluster as a cofactor.

The protein resides in the cytoplasm. It carries out the reaction N(6)-dimethylallyladenosine(37) in tRNA + (sulfur carrier)-SH + AH2 + 2 S-adenosyl-L-methionine = 2-methylsulfanyl-N(6)-dimethylallyladenosine(37) in tRNA + (sulfur carrier)-H + 5'-deoxyadenosine + L-methionine + A + S-adenosyl-L-homocysteine + 2 H(+). Functionally, catalyzes the methylthiolation of N6-(dimethylallyl)adenosine (i(6)A), leading to the formation of 2-methylthio-N6-(dimethylallyl)adenosine (ms(2)i(6)A) at position 37 in tRNAs that read codons beginning with uridine. This is tRNA-2-methylthio-N(6)-dimethylallyladenosine synthase from Nocardia farcinica (strain IFM 10152).